Reading from the N-terminus, the 394-residue chain is MAKRLFMFEKPLGMRDTLPFLYEMKKQVRRTMAEEIERWGYEFIETPTLEYYETVGTASAIADHRLFKLLDQQGHTLVLRPDMTAPIARVAASRLYEDSNPLRLAYNANVFRAQQREGGRPAEFEQIGVELIGDGTVMADAEVISLMAALLKRVGLSHFSVAVGHIGYVNALFLEILGNEERASVLRRFLYEKNYVGYREHVKSLPLSSIDQKRLLDLLSLRGGSEAIEAAKALVTSEEGQRAADELAALLAALKTYGVSEAVKLDMALVSHMSYYTGILFEVYAEQVGFPIGNGGRYDDLLAKFSRPAPATGFGLRVDRLIEAIGETDVRGEIECIVFSQERLAEAVELAEAKRAEGQRVVLQHITGIRDIDAYSQRYRSIVYLLGRSGHDGQ.

This sequence belongs to the class-II aminoacyl-tRNA synthetase family. HisZ subfamily. Heteromultimer composed of HisG and HisZ subunits.

Its subcellular location is the cytoplasm. It functions in the pathway amino-acid biosynthesis; L-histidine biosynthesis; L-histidine from 5-phospho-alpha-D-ribose 1-diphosphate: step 1/9. Functionally, required for the first step of histidine biosynthesis. May allow the feedback regulation of ATP phosphoribosyltransferase activity by histidine. In Geobacillus thermodenitrificans (strain NG80-2), this protein is ATP phosphoribosyltransferase regulatory subunit.